The chain runs to 372 residues: MFFRLRFLVFFVLFRNLCCLLLSGDLFRVYGLGFNLGVMIALQILVGICLSWFFFRCIIPQNWIFTLLIHLEFDLGFIIRSLHIIFTSLLYFLLYIHIIKVIFLCLIFDSSMLVWFFGFLIFIFILIIAFIGYTLPCTSMSYWGLTVFSNILATIPLIGIYICQWIWCSEFINDFTLLKLHSIHIFLPFVLLFLIGAHFFVLHYFLSSDGLLDRFPFYYERFFFFLLYYLRDLFLIINILCFLIYYICIYWFFVFHEESWIIVDTLKTSDKILPEWFFLSFFGFLKSVPDKFMGLFLLFVLCFALFLFILNCILIFIYCRSSLLWMSLSLVLFYYLCVGGFLSLYVVLCFPLWMEIQFWVLLLFCFIVCRLD.

A run of 4 helical transmembrane segments spans residues 32 to 52, 77 to 99, 114 to 134, and 180 to 200; these read LGFN…CLSW, FIIR…IHII, VWFF…IGYT, and LHSI…AHFF. Heme b is bound by residues H83 and H97. The heme b site is built by H184 and H198. Residue H203 coordinates a ubiquinone. 4 consecutive transmembrane segments (helical) span residues 228–248, 297–317, 330–350, and 351–371; these read YYLR…YYIC, LLFV…LIFI, LVLF…VLCF, and PLWM…VCRL.

This sequence belongs to the cytochrome b family. The main subunits of complex b-c1 are: cytochrome b, cytochrome c1 and the Rieske protein. Heme b serves as cofactor.

Its subcellular location is the mitochondrion inner membrane. Its function is as follows. Component of the ubiquinol-cytochrome c reductase complex (complex III or cytochrome b-c1 complex) that is part of the mitochondrial respiratory chain. The b-c1 complex mediates electron transfer from ubiquinol to cytochrome c. Contributes to the generation of a proton gradient across the mitochondrial membrane that is then used for ATP synthesis. This chain is Cytochrome b (MT-CYB), found in Trypanoplasma borreli.